Here is a 221-residue protein sequence, read N- to C-terminus: Bcl-2-related ovarian killer protein homolog A (221 aa).

Residues 32 to 44 (KVLCRDYIHSRLH) carry the BH4 motif. Residues 64–80 (VSSVLLWLGDELEYLRP) carry the BH3 motif. Positions 110-140 (EIFSTEYSRKGLEKHKGVTWGKIVSLYAVAG) match the BH1 motif. The BH2 motif lies at 173-187 (WLKKRGGWADITKCV). A helical transmembrane segment spans residues 198–218 (WLVTAACACGHYLKAVVFYLL).

It belongs to the Bcl-2 family. Strongest expression in ovary and eye, weaker expression in gut, kidney and brain. Little expression in liver or heart.

It is found in the membrane. May play a role in apoptosis. Does not appear to show pro-apoptotic activity when expressed ectopically in early embryos. The sequence is that of Bcl-2-related ovarian killer protein homolog A from Danio rerio (Zebrafish).